Reading from the N-terminus, the 325-residue chain is MDKSSGELVTLTPNNNNTVQPVALMRLGVFVPTLKSLKNSKKNTLSRTDATEELTRLSLARAEGFDKVEITGPRLDMDNDFKTWVGIIHSFARHNVIGDKVELPFVEFAKLCGIPSSQSSRRLRERISPSLKRIAGTVISFSRTDEKHTREYITHLVQSAYYDTERDIVQLQADPRLFELYQFDRKVLLQLKAINALKRRESAQALYTFIESLPRDPAPISLARLRARLNLKSPVFSQNQTVRRAMEQLREIGYLDYTEIQRGRTKFFCIHYRRPRLKAPNDESKENPLQPSPAEKVSPEMAEKLALLEKLGITLDDLEKLFKSR.

The disordered stretch occupies residues Ala279 to Ser298.

The protein belongs to the initiator RepB protein family.

Functionally, this protein is essential for plasmid replication; it is involved in copy control functions. In vitro, binds to the DNA repeat units, BCDD'D'', EFG and HIJ. The sequence is that of RepFIB replication protein A (repA) from Escherichia coli.